The following is a 542-amino-acid chain: ABC transport system permease protein p69 (542 aa).

The next 12 helical transmembrane spans lie at 23–43, 77–97, 114–134, 140–160, 212–232, 236–256, 287–307, 350–370, 386–406, 412–432, 481–501, and 509–529; these read ALAI…FSGF, IFYV…FSYL, FTIF…NNLF, ATLT…TAFF, LSIA…GGTV, LVLI…ASVF, VMIY…LVQL, TQAI…GFLA, LLVI…PIIF, IIFV…TINF, LVVF…NFFE, and GTIT…LMAV. The region spanning 349-526 is the ABC transmembrane type-1 domain; that stretch reads TTQAISLITL…VYLMVFEVIL (178 aa).

It belongs to the binding-protein-dependent transport system permease family.

Its subcellular location is the cell membrane. Its function is as follows. Probably part of a high-affinity transport system. The sequence is that of ABC transport system permease protein p69 (p69) from Mycoplasma pneumoniae (strain ATCC 29342 / M129 / Subtype 1) (Mycoplasmoides pneumoniae).